A 328-amino-acid polypeptide reads, in one-letter code: Hairy/enhancer-of-split related with YRPW motif-like protein (328 aa).

The interval 1–57 (MKRPKEPSGSDGESDGPIDVGQEGQLSQMARPLSTPSSSQMQARKKHRGIIEKRRRD) is disordered. Over residues 24–42 (GQLSQMARPLSTPSSSQMQ) the composition is skewed to polar residues. Residues 42–111 (QARKKHRGII…GGTGFFDARA (70 aa)) form a transcriptional repression and interaction with NCOR1 and SIN3A region. The bHLH domain occupies 43 to 98 (ARKKHRGIIEKRRRDRINSSLSELRRLVPTAFEKQGSSKLEKAEVLQMTVDHLKML). The Orange domain maps to 116 to 153 (FRSIGFRECLTEVIRYLGVLEGPSSRADPVRIRLLSHL). Residues 239-308 (SRGASSTRRA…NSSSPGPAGR (70 aa)) are disordered. Over residues 261-270 (APSSRAARSS) the composition is skewed to low complexity.

This sequence belongs to the HEY family. Self-associates. Interacts with GATA4, GATA6, HES1, HEY1 and HEY2. Interacts with HDAC1, NCOR1 and SIN3A.

The protein localises to the nucleus. Its function is as follows. Downstream effector of Notch signaling which may be required for cardiovascular development. Transcriptional repressor which binds preferentially to the canonical E box sequence 5'-CACGTG-3'. Represses transcription by the cardiac transcriptional activators GATA4 and GATA6. The chain is Hairy/enhancer-of-split related with YRPW motif-like protein (HEYL) from Homo sapiens (Human).